Consider the following 327-residue polypeptide: Glutaminase (327 aa).

Substrate contacts are provided by Ser92, Asn143, Asn195, Tyr218, Tyr263, and Val281.

It belongs to the glutaminase family. As to quaternary structure, homotetramer.

It catalyses the reaction L-glutamine + H2O = L-glutamate + NH4(+). This chain is Glutaminase, found in Synechocystis sp. (strain ATCC 27184 / PCC 6803 / Kazusa).